The sequence spans 270 residues: Formamidopyrimidine-DNA glycosylase (270 aa).

The active-site Schiff-base intermediate with DNA is the P2. Catalysis depends on E3, which acts as the Proton donor. K58 serves as the catalytic Proton donor; for beta-elimination activity. DNA contacts are provided by H91, R110, and R151. Residues 236–270 form an FPG-type zinc finger; the sequence is LVYGRDGLPCPNCGRALKHATIGQRASVWCSHCQR. R260 serves as the catalytic Proton donor; for delta-elimination activity.

Belongs to the FPG family. In terms of assembly, monomer. The cofactor is Zn(2+).

It carries out the reaction Hydrolysis of DNA containing ring-opened 7-methylguanine residues, releasing 2,6-diamino-4-hydroxy-5-(N-methyl)formamidopyrimidine.. It catalyses the reaction 2'-deoxyribonucleotide-(2'-deoxyribose 5'-phosphate)-2'-deoxyribonucleotide-DNA = a 3'-end 2'-deoxyribonucleotide-(2,3-dehydro-2,3-deoxyribose 5'-phosphate)-DNA + a 5'-end 5'-phospho-2'-deoxyribonucleoside-DNA + H(+). Its function is as follows. Involved in base excision repair of DNA damaged by oxidation or by mutagenic agents. Acts as a DNA glycosylase that recognizes and removes damaged bases. Has a preference for oxidized purines, such as 7,8-dihydro-8-oxoguanine (8-oxoG). Has AP (apurinic/apyrimidinic) lyase activity and introduces nicks in the DNA strand. Cleaves the DNA backbone by beta-delta elimination to generate a single-strand break at the site of the removed base with both 3'- and 5'-phosphates. This chain is Formamidopyrimidine-DNA glycosylase, found in Stenotrophomonas maltophilia (strain K279a).